A 57-amino-acid chain; its full sequence is uncharacterized protein (57 aa).

Residues 9–45 (NWQEEIRKIIIERVRREAKKRLLEETRKLRMEMKSSK) are a coiled coil.

This is an uncharacterized protein from Archaeoglobus fulgidus (strain ATCC 49558 / DSM 4304 / JCM 9628 / NBRC 100126 / VC-16).